The sequence spans 241 residues: Chloride intracellular channel protein 1 (241 aa).

A2 is modified (N-acetylalanine). Residues 2 to 90 (AEEQPQVELF…EEFLEAVLCP (89 aa)) are required for insertion into the membrane. Position 13 is an N6-acetyllysine (K13). Positions 24-27 (CPFS) match the G-site motif. Cysteines 24 and 59 form a disulfide. A helical transmembrane segment spans residues 26 to 46 (FSQRLFMVLWLKGVTFNVTTV). The GST C-terminal domain occupies 93 to 233 (YPKLAALNPE…PDDEEIELAY (141 aa)). An N6-acetyllysine modification is found at K119. The residue at position 121 (S121) is a Phosphoserine. K131 bears the N6-acetyllysine mark. 2 positions are modified to phosphoserine: S156 and S211. Y233 carries the phosphotyrosine modification.

Belongs to the chloride channel CLIC family. Monomer. Homodimer (in vitro). Interacts with TRAPPC2. Dimerization requires a conformation change that leads to the exposure of a large hydrophobic surface. In vivo, this may lead to membrane insertion.

The protein resides in the nucleus. The protein localises to the nucleus membrane. Its subcellular location is the cytoplasm. It localises to the cell membrane. It is found in the endoplasmic reticulum. It carries out the reaction L-dehydroascorbate + 2 glutathione = glutathione disulfide + L-ascorbate. The enzyme catalyses chloride(in) = chloride(out). The catalysed reaction is iodide(out) = iodide(in). It catalyses the reaction thiocyanate(in) = thiocyanate(out). It carries out the reaction nitrate(in) = nitrate(out). The enzyme catalyses bromide(in) = bromide(out). The catalysed reaction is fluoride(in) = fluoride(out). Functionally, in the soluble state, catalyzes glutaredoxin-like thiol disulfide exchange reactions with reduced glutathione as electron donor. Reduces selenite and dehydroascorbate and may act as an antioxidant during oxidative stress response. Can insert into membranes and form voltage-dependent multi-ion conductive channels. Membrane insertion seems to be redox-regulated and may occur only under oxidizing conditions. Involved in regulation of the cell cycle. The protein is Chloride intracellular channel protein 1 (CLIC1) of Oryctolagus cuniculus (Rabbit).